The following is an 84-amino-acid chain: Small ribosomal subunit protein uS17 (84 aa).

It belongs to the universal ribosomal protein uS17 family. Part of the 30S ribosomal subunit.

Functionally, one of the primary rRNA binding proteins, it binds specifically to the 5'-end of 16S ribosomal RNA. This is Small ribosomal subunit protein uS17 from Clostridium botulinum (strain ATCC 19397 / Type A).